The primary structure comprises 550 residues: Cochlin (550 aa).

The signal sequence occupies residues 1 to 15 (MPAAWMPVLRLGAYA). The 94-residue stretch at 28–121 (VPIAITCFTR…QTLARWSASF (94 aa)) folds into the LCCL domain. Cystine bridges form between Cys-34/Cys-50 and Cys-54/Cys-74. Asn-100 carries an N-linked (GlcNAc...) asparagine glycan. A compositionally biased stretch (polar residues) spans 126-139 (GKSSTQEATGQAVS). The interval 126-158 (GKSSTQEATGQAVSTARPPTGKRLKKTPEKKTG) is disordered. VWFA domains follow at residues 165-350 (DIAF…VQKL) and 367-537 (NIAF…VSDI).

In terms of assembly, monomer. May form homodimer. Interacts with type II collagen. Interacts with ANXA2. Interacts with SLC44A2. N-glycosylated.

It is found in the secreted. Its subcellular location is the extracellular space. It localises to the extracellular matrix. Plays a role in the control of cell shape and motility in the trabecular meshwork. The chain is Cochlin (COCH) from Cavia porcellus (Guinea pig).